Reading from the N-terminus, the 622-residue chain is MSGPVDTAKSITKKRKRKHGGGARAATETDDATTQPVVENGAVTDSPEKGEDTKKSEKNGKDKSTKKRKVSHASSDEENESEGEQGAPSQADGDSDNNGDDGDDNSEAENGDNGDKKDAESTDLPSADALRLPTVEGEPQKFTELGLTEKTLKAINDMGFDTMTEIQRRTIPPLLAGRDVLGAAKTGSGKTLSFLIPAVEMLSALRFKPRNGTGVIVVSPTRELALQIFGVARELCQYHSQTYGIVIGGANRRAEAEKLMKGVNLLIATPGRLLDHLQNTQGFIFKNLKTLVIDEADRILEVGFEDEMRQIVKILPSEERQTMLFSATQTTKVEDLARISLRPGPLYINVDHRKEHSTVEGLEQGYVICEADKRFLLLFSFLKRNLKKKIIVFFSSCNCVKYHAELLNYIDLPVLELHGKQKQQKRTNTFFEFCNAKQGTLICTDVAARGLDIPAVDWIIQFDPPDDPRDYIHRVGRTARGANAKGRSLMFLQPSEVGFLKHLKEARVPVVEFEFPANKIVNVQSQLEKLIGQNYYLNKSAKEGYRSYLQAYASHSLRSVFDVHKLDLVKVAKGFGFSTPPRIDIQLGASLSRDKKQQQQGRRNYGSQPHSKGLKFKRKHDD.

Positions 1–137 are disordered; the sequence is MSGPVDTAKS…DALRLPTVEG (137 aa). Residues 11-21 show a composition bias toward basic residues; that stretch reads ITKKRKRKHGG. Basic and acidic residues predominate over residues 46–63; the sequence is SPEKGEDTKKSEKNGKDK. A compositionally biased stretch (acidic residues) spans 93 to 112; it reads GDSDNNGDDGDDNSEAENGD. A Q motif motif is present at residues 140-168; the sequence is QKFTELGLTEKTLKAINDMGFDTMTEIQR. Residues 171-347 enclose the Helicase ATP-binding domain; the sequence is IPPLLAGRDV…RISLRPGPLY (177 aa). 184-191 lines the ATP pocket; the sequence is AKTGSGKT. The DEAD box signature appears at 294–297; the sequence is DEAD. The 171-residue stretch at 361–531 folds into the Helicase C-terminal domain; sequence GLEQGYVICE…NVQSQLEKLI (171 aa). The tract at residues 588 to 622 is disordered; that stretch reads GASLSRDKKQQQQGRRNYGSQPHSKGLKFKRKHDD. Polar residues predominate over residues 598 to 610; the sequence is QQQGRRNYGSQPH. The span at 612–622 shows a compositional bias: basic residues; it reads KGLKFKRKHDD.

It belongs to the DEAD box helicase family. DDX18/HAS1 subfamily. As to quaternary structure, associates in the nucleolus with the 60S and pre-60S ribosomal subunits.

It localises to the nucleus. The protein localises to the nucleolus. It carries out the reaction ATP + H2O = ADP + phosphate + H(+). ATP-dependent RNA helicase involved in 40S ribosomal subunit biogenesis. Required for the processing and cleavage of 35S pre-rRNA at sites A0, A1, and A2, leading to mature 18S rRNA. This chain is ATP-dependent RNA helicase has1 (has1), found in Neosartorya fischeri (strain ATCC 1020 / DSM 3700 / CBS 544.65 / FGSC A1164 / JCM 1740 / NRRL 181 / WB 181) (Aspergillus fischerianus).